The chain runs to 241 residues: Peptidoglycan endopeptidase RipB (241 aa).

The signal sequence occupies residues M1–A31. Positions R109 to Y241 constitute a NlpC/P60 domain. C152 (nucleophile) is an active-site residue. Catalysis depends on H201, which acts as the Proton acceptor. E213 is a catalytic residue.

Belongs to the peptidase C40 family. As to quaternary structure, monomer.

Functionally, peptidoglycan endopeptidase that cleaves the bond between D-glutamate and meso-diaminopimelate. Binds high-molecular weight peptidoglycan, but does not degrade it. Required for normal separation of daughter cells after cell division and cell wall integrity. Required for host cell invasion. The polypeptide is Peptidoglycan endopeptidase RipB (ripB) (Mycobacterium tuberculosis (strain CDC 1551 / Oshkosh)).